The chain runs to 155 residues: 17.6 kDa class I heat shock protein 1 (155 aa).

The sHSP domain occupies 39-154; sequence SSSAIANARV…KAQVKSIDIS (116 aa).

The protein belongs to the small heat shock protein (HSP20) family. In terms of assembly, forms oligomeric structures. Binds to AKR2A.

It localises to the cytoplasm. In terms of biological role, possesses chaperone activity. In Arabidopsis thaliana (Mouse-ear cress), this protein is 17.6 kDa class I heat shock protein 1 (HSP17.6A).